We begin with the raw amino-acid sequence, 268 residues long: Testis-specific serine/threonine-protein kinase 3 (268 aa).

Residues 10 to 265 (YQLGKTIGEG…IEEVSWHPWL (256 aa)) form the Protein kinase domain. Residues 16–24 (IGEGTYSKV) and K39 contribute to the ATP site. D134 functions as the Proton acceptor in the catalytic mechanism. The residue at position 166 (S166) is a Phosphoserine. The residue at position 168 (T168) is a Phosphothreonine.

This sequence belongs to the protein kinase superfamily. CAMK Ser/Thr protein kinase family. Mg(2+) is required as a cofactor. It depends on Mn(2+) as a cofactor. In terms of processing, autophosphorylated at Ser-166. Phosphorylation at Thr-168 by PDPK1 activates the serine/threonine protein kinase activity.

The protein resides in the cell projection. It localises to the cilium. The protein localises to the flagellum. The enzyme catalyses L-seryl-[protein] + ATP = O-phospho-L-seryl-[protein] + ADP + H(+). It carries out the reaction L-threonyl-[protein] + ATP = O-phospho-L-threonyl-[protein] + ADP + H(+). Activated by phosphorylation on Thr-168 by PDPK1. Serine/threonine protein kinase required for spermatid development and male fertility. The chain is Testis-specific serine/threonine-protein kinase 3 from Homo sapiens (Human).